The chain runs to 192 residues: HTH-type transcriptional repressor SCO4008 (192 aa).

Residues Glu-7–Leu-67 form the HTH tetR-type domain. The segment at residues Arg-30–Tyr-49 is a DNA-binding region (H-T-H motif).

As to quaternary structure, homodimer. Four dimers bind to the two operator sites.

Binding of a wide range of cationic hydrophobic compounds to SCO4008 causes a decrease in DNA-binding, probably via allosteric conformational change of SCO4008. Probably regulates the expression of its own gene and the adjacent SCO4007 gene by binding to two operator sites in the SCO4007-SCO4008 intergenic region. This chain is HTH-type transcriptional repressor SCO4008, found in Streptomyces coelicolor (strain ATCC BAA-471 / A3(2) / M145).